The following is a 306-amino-acid chain: Homoserine kinase (306 aa).

Residue 84–94 (PAGLGLGSSGA) coordinates ATP.

The protein belongs to the GHMP kinase family. Homoserine kinase subfamily.

It is found in the cytoplasm. It carries out the reaction L-homoserine + ATP = O-phospho-L-homoserine + ADP + H(+). The protein operates within amino-acid biosynthesis; L-threonine biosynthesis; L-threonine from L-aspartate: step 4/5. Its function is as follows. Catalyzes the ATP-dependent phosphorylation of L-homoserine to L-homoserine phosphate. In Sulfurisphaera tokodaii (strain DSM 16993 / JCM 10545 / NBRC 100140 / 7) (Sulfolobus tokodaii), this protein is Homoserine kinase.